The sequence spans 180 residues: Shikimate kinase (180 aa).

14 to 19 (GAGKSC) is a binding site for ATP. A Mg(2+)-binding site is contributed by S18. D36, R60, and G82 together coordinate substrate. Residue R120 coordinates ATP. A substrate-binding site is contributed by R139.

Belongs to the shikimate kinase family. Monomer. Mg(2+) is required as a cofactor.

It localises to the cytoplasm. It carries out the reaction shikimate + ATP = 3-phosphoshikimate + ADP + H(+). The protein operates within metabolic intermediate biosynthesis; chorismate biosynthesis; chorismate from D-erythrose 4-phosphate and phosphoenolpyruvate: step 5/7. Its function is as follows. Catalyzes the specific phosphorylation of the 3-hydroxyl group of shikimic acid using ATP as a cosubstrate. The protein is Shikimate kinase of Xanthomonas axonopodis pv. citri (strain 306).